Here is a 360-residue protein sequence, read N- to C-terminus: Histidinol-phosphate aminotransferase (360 aa).

Lys213 bears the N6-(pyridoxal phosphate)lysine mark.

Belongs to the class-II pyridoxal-phosphate-dependent aminotransferase family. Histidinol-phosphate aminotransferase subfamily. In terms of assembly, homodimer. Pyridoxal 5'-phosphate is required as a cofactor.

The catalysed reaction is L-histidinol phosphate + 2-oxoglutarate = 3-(imidazol-4-yl)-2-oxopropyl phosphate + L-glutamate. Its pathway is amino-acid biosynthesis; L-histidine biosynthesis; L-histidine from 5-phospho-alpha-D-ribose 1-diphosphate: step 7/9. The sequence is that of Histidinol-phosphate aminotransferase from Baumannia cicadellinicola subsp. Homalodisca coagulata.